The following is a 260-amino-acid chain: 1-(5-phosphoribosyl)-5-[(5-phosphoribosylamino)methylideneamino] imidazole-4-carboxamide isomerase (260 aa).

The Proton acceptor role is filled by D8. D130 acts as the Proton donor in catalysis.

The protein belongs to the HisA/HisF family.

It localises to the cytoplasm. It carries out the reaction 1-(5-phospho-beta-D-ribosyl)-5-[(5-phospho-beta-D-ribosylamino)methylideneamino]imidazole-4-carboxamide = 5-[(5-phospho-1-deoxy-D-ribulos-1-ylimino)methylamino]-1-(5-phospho-beta-D-ribosyl)imidazole-4-carboxamide. Its pathway is amino-acid biosynthesis; L-histidine biosynthesis; L-histidine from 5-phospho-alpha-D-ribose 1-diphosphate: step 4/9. This is 1-(5-phosphoribosyl)-5-[(5-phosphoribosylamino)methylideneamino] imidazole-4-carboxamide isomerase from Chlorobium phaeobacteroides (strain BS1).